A 528-amino-acid polypeptide reads, in one-letter code: Poly(A) RNA polymerase GLD2 (528 aa).

2 disordered regions span residues 1 to 41 (MYPN…QPQQ) and 99 to 121 (RDQS…KRRS). Composition is skewed to low complexity over residues 16-32 (PCEQ…EQPL) and 102-113 (SPLISPASPSSS). Mg(2+) contacts are provided by D259 and D261. One can recognise a PAP-associated domain in the interval 428-481 (LGDLLLGFLKYFAIEFDWSKDIISVREAKALPRSDDYEWRNKFICVEEPYDRTN).

Belongs to the DNA polymerase type-B-like family. GLD2 subfamily. Component of a complex at least composed of cpeb1, cpsf1, tent2/gld2, pabpc1/ePAB, parn and sympk. Following oocyte maturation, parn is expelled from the complex. Interacts with rbm9 and sympk. Mg(2+) serves as cofactor. It depends on Mn(2+) as a cofactor.

The protein resides in the cytoplasm. The enzyme catalyses RNA(n) + ATP = RNA(n)-3'-adenine ribonucleotide + diphosphate. In terms of biological role, cytoplasmic poly(A) RNA polymerase that adds successive AMP monomers to the 3'-end of specific RNAs, forming a poly(A) tail. In contrast to the canonical nuclear poly(A) RNA polymerase, it only adds poly(A) to selected cytoplasmic mRNAs during oocyte maturation. Plays a central role during oocyte maturation by mediating polyadenylation of dormant mRNAs, which contain 5'AAUAAA-3' sequence in their 3'-UTR. In immature oocytes, polyadenylation of poly(A) tails is counteracted by the ribonuclease parn. During maturation parn is excluded from the ribonucleoprotein complex, allowing poly(A) elongation and activation of mRNAs. May not play a role in replication-dependent histone mRNA degradation. The protein is Poly(A) RNA polymerase GLD2 (tent2) of Xenopus tropicalis (Western clawed frog).